Consider the following 335-residue polypeptide: Eukaryotic translation initiation factor 3 subunit H-A (335 aa).

One can recognise an MPN domain in the interval 22 to 156 (IQVDGLVVLK…LKAYRLTPKL (135 aa)). Residues 254 to 272 (QQQKQQYQQRRQQENAQRQ) are compositionally biased toward low complexity. Residues 254-282 (QQQKQQYQQRRQQENAQRQSRGEPPLPEE) are disordered.

This sequence belongs to the eIF-3 subunit H family. Component of the eukaryotic translation initiation factor 3 (eIF-3) complex, which is composed of 13 subunits: eif3a, eif3b, eif3c, eif3d, eif3e, eif3f, eif3g, eif3h, eif3i, eif3j, eif3k, eif3l and eif3m.

Its subcellular location is the cytoplasm. Functionally, component of the eukaryotic translation initiation factor 3 (eIF-3) complex, which is involved in protein synthesis of a specialized repertoire of mRNAs and, together with other initiation factors, stimulates binding of mRNA and methionyl-tRNAi to the 40S ribosome. The eIF-3 complex specifically targets and initiates translation of a subset of mRNAs involved in cell proliferation. The chain is Eukaryotic translation initiation factor 3 subunit H-A (eif3ha) from Danio rerio (Zebrafish).